Here is a 421-residue protein sequence, read N- to C-terminus: Tyrosine--tRNA ligase (421 aa).

Tyr35 is a binding site for L-tyrosine. Residues 40 to 49 (PTADSLHIGH) carry the 'HIGH' region motif. The L-tyrosine site is built by Tyr170 and Gln174. The 'KMSKS' region signature appears at 232–236 (KFGKT). Lys235 is a binding site for ATP. Positions 355–421 (LSLVDVLVES…GKKKYFLITY (67 aa)) constitute an S4 RNA-binding domain.

Belongs to the class-I aminoacyl-tRNA synthetase family. TyrS type 1 subfamily. In terms of assembly, homodimer.

The protein localises to the cytoplasm. The catalysed reaction is tRNA(Tyr) + L-tyrosine + ATP = L-tyrosyl-tRNA(Tyr) + AMP + diphosphate + H(+). Its function is as follows. Catalyzes the attachment of tyrosine to tRNA(Tyr) in a two-step reaction: tyrosine is first activated by ATP to form Tyr-AMP and then transferred to the acceptor end of tRNA(Tyr). In Bacillus velezensis (strain DSM 23117 / BGSC 10A6 / LMG 26770 / FZB42) (Bacillus amyloliquefaciens subsp. plantarum), this protein is Tyrosine--tRNA ligase.